A 177-amino-acid polypeptide reads, in one-letter code: Alpha-crystallin A chain (177 aa).

An N-acetylmethionine modification is found at methionine 1. The region spanning 52 to 162 (VFRNFLDSGI…NWQDRPIPVS (111 aa)) is the sHSP domain. Residues histidine 100 and glutamate 102 each coordinate Zn(2+). Cysteine 131 and cysteine 142 are disulfide-bonded. Residues 146-177 (TRPGDDSNWQDRPIPVSREEKQGTQPEIRADP) form a disordered region. Residue serine 162 is glycosylated (O-linked (GlcNAc) serine). Positions 162 to 177 (SREEKQGTQPEIRADP) are enriched in basic and acidic residues.

It belongs to the small heat shock protein (HSP20) family. In terms of assembly, heteropolymer composed of three CRYAA and one CRYAB subunits. Inter-subunit bridging via zinc ions enhances stability, which is crucial as there is no protein turn over in the lens. Can also form homodimers and homotetramers (dimers of dimers) which serve as the building blocks of homooligomers.

The protein localises to the cytoplasm. It is found in the nucleus. In terms of biological role, contributes to the transparency and refractive index of the lens. May act as a chaperone, preventing aggregation of various proteins under a wide range of stress conditions. The sequence is that of Alpha-crystallin A chain (cryaa) from Squalus acanthias (Spiny dogfish).